A 185-amino-acid chain; its full sequence is MGKKQNKKKVEEVLEEEEEEYVVEKVLDRRVVKGKVEYLLKWKGFSDEDNTWEPEENLDCPDLIAEFLQSQKTAHETDKSEGGKRKADSDSEDKGEESKPKKKKEESEKPRGFARGLEPERIIGATDSSGELMFLMKWKNSDEADLVPAKEANVKCPQVVISFYEERLTWHSYPSEDDDKKDDKN.

Glycyl lysine isopeptide (Lys-Gly) (interchain with G-Cter in SUMO2) cross-links involve residues Lys9 and Lys33. The region spanning 21–79 (YVVEKVLDRRVVKGKVEYLLKWKGFSDEDNTWEPEENLDCPDLIAEFLQSQKTAHETDK) is the Chromo 1 domain. The tract at residues 63-124 (LIAEFLQSQK…RGLEPERIIG (62 aa)) is disordered. Positions 73 to 89 (TAHETDKSEGGKRKADS) are enriched in basic and acidic residues. Phosphoserine occurs at positions 89 and 91. Residues 96–121 (EESKPKKKKEESEKPRGFARGLEPER) are compositionally biased toward basic and acidic residues. Residues Lys99 and Lys150 each participate in a glycyl lysine isopeptide (Lys-Gly) (interchain with G-Cter in SUMO2) cross-link. In terms of domain architecture, Chromo 2; shadow subtype spans 117–175 (LEPERIIGATDSSGELMFLMKWKNSDEADLVPAKEANVKCPQVVISFYEERLTWHSYPS). Ser175 is subject to Phosphoserine.

In terms of assembly, homodimer. Interacts directly with CHAF1A, EMSY, LBR, TIF1/TIF1A and TRIM28/TIF1B PXVXL motif via the chromoshadow domain. Interacts directly with histone H3 methylated at 'Lys-9' via the chromo domain. Interacts with SUV39H1 and SETDB1, KMT5B and KMT5C. Interacts with PRDM6. Interacts with POGZ. Interacts with CHAMP1. Interacts with INCENP. Interacts with SGO1; the CBX1 homodimer binds to one molecule of SGO1. Interacts with LRIF1 (via PxVxL motif). Interacts with HDGFL2. Interacts with CHD3. Interacts with CHD4. Post-translationally, not phosphorylated. In terms of processing, ubiquitinated. Expressed in all adult and embryonic tissues.

The protein resides in the nucleus. Functionally, component of heterochromatin. Recognizes and binds histone H3 tails methylated at 'Lys-9', leading to epigenetic repression. Interaction with lamin B receptor (LBR) can contribute to the association of the heterochromatin with the inner nuclear membrane. In Homo sapiens (Human), this protein is Chromobox protein homolog 1 (CBX1).